The following is a 1250-amino-acid chain: DNA-directed RNA polymerase subunit beta (1250 aa).

The segment at 1215 to 1250 (QDLNDDDINPDDTIDAELDDNLFDDDFDDTFDDDDL) is disordered.

This sequence belongs to the RNA polymerase beta chain family. In terms of assembly, the RNAP catalytic core consists of 2 alpha, 1 beta, 1 beta' and 1 omega subunit. When a sigma factor is associated with the core the holoenzyme is formed, which can initiate transcription.

The catalysed reaction is RNA(n) + a ribonucleoside 5'-triphosphate = RNA(n+1) + diphosphate. Functionally, DNA-dependent RNA polymerase catalyzes the transcription of DNA into RNA using the four ribonucleoside triphosphates as substrates. The chain is DNA-directed RNA polymerase subunit beta from Acetivibrio thermocellus (strain ATCC 27405 / DSM 1237 / JCM 9322 / NBRC 103400 / NCIMB 10682 / NRRL B-4536 / VPI 7372) (Clostridium thermocellum).